The following is a 614-amino-acid chain: Signal recognition particle receptor subunit alpha homolog (614 aa).

The segment at 119-244 (EASAKQVKAP…DRSRDSPDDV (126 aa)) is disordered. The segment covering 149–160 (QDDKKPVEKRVN) has biased composition (basic and acidic residues). Residues 164–178 (APPPSKSQPSSPPTG) are compositionally biased toward pro residues. Residues 232–241 (ALLDRSRDSP) are compositionally biased toward basic and acidic residues. 2 positions are modified to phosphoserine: S237 and S240. Y246 carries the phosphotyrosine modification. Residues S268, S278, and S279 each carry the phosphoserine modification. A compositionally biased stretch (acidic residues) spans 268-285 (SEDEADNEDASSEGEAEE). A disordered region spans residues 268 to 290 (SEDEADNEDASSEGEAEEQVQSK). An NG domain region spans residues 396–613 (YTIIFCGVNG…NVNAVVNSLM (218 aa)). Residues 402 to 409 (GVNGVGKS), 497 to 501 (DTAGR), and 565 to 568 (TKFD) contribute to the GTP site.

It belongs to the GTP-binding SRP family. Heterodimer of SrpRalpha and SrpRbeta. In terms of tissue distribution, in 8-9 hours embryos, expression is seen in a segmental pattern along embryonic ventral midline.

It localises to the endoplasmic reticulum membrane. In terms of biological role, component of the SRP (signal recognition particle) receptor. Ensures, in conjunction with the signal recognition particle, the correct targeting of the nascent secretory proteins to the endoplasmic reticulum membrane system. Forms a guanosine 5'-triphosphate (GTP)-dependent complex with the SRP subunit Srp54. SRP receptor compaction and GTPase rearrangement drive SRP-mediated cotranslational protein translocation into the ER. May have a role in axonogenesis. This is Signal recognition particle receptor subunit alpha homolog from Drosophila melanogaster (Fruit fly).